Reading from the N-terminus, the 433-residue chain is Xylose isomerase (433 aa).

Positions 305 and 307 each coordinate Mg(2+).

This sequence belongs to the xylose isomerase family. In terms of assembly, homotetramer. It depends on Mg(2+) as a cofactor.

The protein resides in the cytoplasm. The catalysed reaction is alpha-D-xylose = alpha-D-xylulofuranose. This is Xylose isomerase from Cereibacter sphaeroides (strain KD131 / KCTC 12085) (Rhodobacter sphaeroides).